Reading from the N-terminus, the 466-residue chain is Asparagine--tRNA ligase (466 aa).

It belongs to the class-II aminoacyl-tRNA synthetase family. Homodimer.

It localises to the cytoplasm. The catalysed reaction is tRNA(Asn) + L-asparagine + ATP = L-asparaginyl-tRNA(Asn) + AMP + diphosphate + H(+). This chain is Asparagine--tRNA ligase, found in Klebsiella pneumoniae subsp. pneumoniae (strain ATCC 700721 / MGH 78578).